A 288-amino-acid chain; its full sequence is MALFRKKDKYIRITPNNSLKGSVSHNVPEVPDELFAKCPACKHMIYKKDLGLAKICPTCSYNFRISAQERLTLTVDEGSFQELFTSIETKDPLRFPGYQEKLQKAKETTGLHEAVLTGKAMVKEQKIALAIMDSHFIMASMGTVVGEKITRLFELAIEENLPVVIFTASGGARMQEGIMSLMQMAKVSAAVKRHSNAGLFYLTILTDPTTGGVTASFAMEGDIILAEPQSLVGFAGRRVIETTVRENLPDDFQKAEFLQDHGFVDAIVKRTELRDKIAHLVAFHGGGQ.

The CoA carboxyltransferase N-terminal domain maps to 34 to 288; that stretch reads LFAKCPACKH…HLVAFHGGGQ (255 aa). Residues C38, C41, C56, and C59 each coordinate Zn(2+). The C4-type zinc-finger motif lies at 38–59; sequence CPACKHMIYKKDLGLAKICPTC.

Belongs to the AccD/PCCB family. In terms of assembly, acetyl-CoA carboxylase is a heterohexamer composed of biotin carboxyl carrier protein (AccB), biotin carboxylase (AccC) and two subunits each of ACCase subunit alpha (AccA) and ACCase subunit beta (AccD). Requires Zn(2+) as cofactor.

It localises to the cytoplasm. The enzyme catalyses N(6)-carboxybiotinyl-L-lysyl-[protein] + acetyl-CoA = N(6)-biotinyl-L-lysyl-[protein] + malonyl-CoA. It participates in lipid metabolism; malonyl-CoA biosynthesis; malonyl-CoA from acetyl-CoA: step 1/1. In terms of biological role, component of the acetyl coenzyme A carboxylase (ACC) complex. Biotin carboxylase (BC) catalyzes the carboxylation of biotin on its carrier protein (BCCP) and then the CO(2) group is transferred by the transcarboxylase to acetyl-CoA to form malonyl-CoA. The chain is Acetyl-coenzyme A carboxylase carboxyl transferase subunit beta from Streptococcus pyogenes serotype M1.